The chain runs to 727 residues: Catalase-peroxidase (727 aa).

Residues 1 to 21 (MDAKVEDNIAGKCPMGHGRGP) form a disordered region. The segment at residues 95 to 217 (WHAAGTYRIT…LGAVQMGLIY (123 aa)) is a cross-link (tryptophyl-tyrosyl-methioninium (Trp-Tyr) (with M-243)). The Proton acceptor role is filled by His-96. Positions 217-243 (YVNPEGPNGNPDPLASARDIRETFARM) form a cross-link, tryptophyl-tyrosyl-methioninium (Tyr-Met) (with W-95). Residue His-258 participates in heme b binding.

This sequence belongs to the peroxidase family. Peroxidase/catalase subfamily. In terms of assembly, homodimer or homotetramer. Heme b serves as cofactor. Post-translationally, formation of the three residue Trp-Tyr-Met cross-link is important for the catalase, but not the peroxidase activity of the enzyme.

It carries out the reaction H2O2 + AH2 = A + 2 H2O. The enzyme catalyses 2 H2O2 = O2 + 2 H2O. In terms of biological role, bifunctional enzyme with both catalase and broad-spectrum peroxidase activity. Important for stationary phase survival. In Caulobacter vibrioides (strain ATCC 19089 / CIP 103742 / CB 15) (Caulobacter crescentus), this protein is Catalase-peroxidase.